Reading from the N-terminus, the 84-residue chain is Anaphase-promoting complex subunit 11 (84 aa).

Positions 23, 26, 34, 37, 44, 51, 53, 56, 58, 59, 73, and 76 each coordinate Zn(2+). The RING-type zinc-finger motif lies at 34–77 (CPDCKVPGDDCPLVWGQCSHCFHMHCILKWLHAQQVQQHCPMCR).

Belongs to the RING-box family. As to quaternary structure, the mammalian APC/C is composed at least of 14 distinct subunits ANAPC1, ANAPC2, CDC27/APC3, ANAPC4, ANAPC5, CDC16/APC6, ANAPC7, CDC23/APC8, ANAPC10, ANAPC11, CDC26/APC12, ANAPC13, ANAPC15 and ANAPC16 that assemble into a complex of at least 19 chains with a combined molecular mass of around 1.2 MDa; APC/C interacts with FZR1 and FBXO5. Interacts with the cullin domain of ANAPC2. Interacts with UBE2D2. Auto-ubiquitinated. As to expression, expressed at high levels in skeletal muscle and heart; in moderate levels in brain, kidney, and liver; and at low levels in colon, thymus, spleen, small intestine, placenta, lung and peripheral blood leukocyte.

It localises to the cytoplasm. The protein resides in the nucleus. Its pathway is protein modification; protein ubiquitination. Together with the cullin protein ANAPC2, constitutes the catalytic component of the anaphase promoting complex/cyclosome (APC/C), a cell cycle-regulated E3 ubiquitin ligase that controls progression through mitosis and the G1 phase of the cell cycle. The APC/C complex acts by mediating ubiquitination and subsequent degradation of target proteins: it mainly mediates the formation of 'Lys-11'-linked polyubiquitin chains and, to a lower extent, the formation of 'Lys-48'- and 'Lys-63'-linked polyubiquitin chains. The APC/C complex catalyzes assembly of branched 'Lys-11'-/'Lys-48'-linked branched ubiquitin chains on target proteins. May recruit the E2 ubiquitin-conjugating enzymes to the complex. This Homo sapiens (Human) protein is Anaphase-promoting complex subunit 11 (ANAPC11).